The sequence spans 688 residues: Pescadillo homolog (688 aa).

The 120-residue stretch at 351 to 470 (EVASLFASFT…KLLRHDLYAP (120 aa)) folds into the BRCT domain. Disordered regions lie at residues 411-442 (RPPL…GTRM) and 496-688 (AEQE…TKGR). The segment covering 412–424 (PPLPESALPPLPQ) has biased composition (pro residues). The stretch at 496–536 (AEQESDGEAERQAEEENEEEESEVEGLSMDKEMVETENSEA) forms a coiled coil. 4 stretches are compositionally biased toward acidic residues: residues 510–519 (EENEEEESEV), 530–544 (ETEN…EESV), 554–565 (GSDDEEEESEED), and 576–589 (EAAD…DDEE). Residues 619-634 (KKSKKQKPLAKKHAAQ) are compositionally biased toward basic residues. Positions 627–686 (LAKKHAAQKKKEQEELERQKMMMSRKKRKLLDKMLYSNKKKDEEAEKLRRKRRKIEQGTK) form a coiled coil. Residues 635–646 (KKKEQEELERQK) show a composition bias toward basic and acidic residues.

The protein belongs to the pescadillo family. In terms of assembly, component of the NOP7 complex, composed of ERB1, NOP7 and YTM1. The complex is held together by ERB1, which interacts with NOP7 via its N-terminal domain and with YTM1 via a high-affinity interaction between the seven-bladed beta-propeller domains of the 2 proteins. The NOP7 complex associates with the 66S pre-ribosome.

The protein resides in the nucleus. The protein localises to the nucleolus. It localises to the nucleoplasm. Its function is as follows. Component of the NOP7 complex, which is required for maturation of the 25S and 5.8S ribosomal RNAs and formation of the 60S ribosome. The chain is Pescadillo homolog from Coccidioides immitis (strain RS) (Valley fever fungus).